The primary structure comprises 175 residues: Ribonuclease M5 (175 aa).

Positions 3–83 (NEIIIVEGKS…DVDVFNAFVS (81 aa)) constitute a Toprim domain. Mg(2+) is bound by residues E9, D57, and D59.

It belongs to the ribonuclease M5 family. It depends on Mg(2+) as a cofactor.

It is found in the cytoplasm. It carries out the reaction Endonucleolytic cleavage of RNA, removing 21 and 42 nucleotides, respectively, from the 5'- and 3'-termini of a 5S-rRNA precursor.. Functionally, required for correct processing of both the 5' and 3' ends of 5S rRNA precursor. Cleaves both sides of a double-stranded region yielding mature 5S rRNA in one step. In Mesoplasma florum (strain ATCC 33453 / NBRC 100688 / NCTC 11704 / L1) (Acholeplasma florum), this protein is Ribonuclease M5.